A 306-amino-acid polypeptide reads, in one-letter code: Protein farnesyltransferase/geranylgeranyltransferase type-1 subunit alpha (306 aa).

5 PFTA repeats span residues 48–82 (YSER…NLPN), 84–118 (NLYD…QIME), 125–159 (DPYR…TFDL), 161–195 (NDAK…SKKH), and 201–235 (TIDE…RFDR).

The protein belongs to the protein prenyltransferase subunit alpha family. As to quaternary structure, heterodimer of an alpha and a beta subunit. The cofactor is Mg(2+).

The catalysed reaction is L-cysteinyl-[protein] + (2E,6E)-farnesyl diphosphate = S-(2E,6E)-farnesyl-L-cysteinyl-[protein] + diphosphate. The enzyme catalyses geranylgeranyl diphosphate + L-cysteinyl-[protein] = S-geranylgeranyl-L-cysteinyl-[protein] + diphosphate. Its function is as follows. Essential subunit of both the farnesyltransferase and the geranylgeranyltransferase complex. Contributes to the transfer of a farnesyl or geranylgeranyl moiety from farnesyl or geranylgeranyl diphosphate to a cysteine at the fourth position from the C-terminus of several proteins having the C-terminal sequence Cys-aliphatic-aliphatic-X. The sequence is that of Protein farnesyltransferase/geranylgeranyltransferase type-1 subunit alpha (RAM2) from Candida albicans (Yeast).